A 183-amino-acid chain; its full sequence is MDIDPYKEFGASVELLSFLPSDFFPSVRDLLDTASALYREALESPEHCSPHHTAIRQAILCWVELMTLASWVGQNLQDQASRDLVVNYVNTNMGLKIRQLLWFHISCLTFEREVVLEYLVSFGVWIRTPPAYRPPNAPILSTLPETTVIRRRGRSPRRRTPSPRRRRSQSPRRRRSQSREPQC.

The tract at residues Leu-143–Cys-183 is disordered. Positions Ile-149–Ser-176 are enriched in basic residues. Residues Ser-155, Ser-162, and Ser-170 each carry the phosphoserine; by host modification. The stretch at Ser-155–Pro-161 is one 1; half-length repeat. Residues Ser-155 to Gln-177 form a 3 X 8 AA repeats of S-P-R-R-R-[PR]-S-Q region. The short motif at Arg-158–Arg-175 is the Bipartite nuclear localization signal element. Repeat copies occupy residues Ser-162–Gln-169 and Ser-170–Gln-177. Residues Gln-177 to Cys-183 form an RNA binding region.

Belongs to the orthohepadnavirus core antigen family. Homodimerizes, then multimerizes. Interacts with cytosol exposed regions of viral L glycoprotein present in the reticulum-to-Golgi compartment. Interacts with human FLNB. Phosphorylated form interacts with host importin alpha; this interaction depends on the exposure of the NLS, which itself depends upon genome maturation and/or phosphorylation of the capsid protein. Interacts with host NUP153. In terms of processing, phosphorylated by host SRPK1, SRPK2, and maybe protein kinase C or GAPDH. Phosphorylation is critical for pregenomic RNA packaging. Protein kinase C phosphorylation is stimulated by HBx protein and may play a role in transport of the viral genome to the nucleus at the late step during the viral replication cycle.

It is found in the virion. The protein localises to the host cytoplasm. In terms of biological role, self assembles to form an icosahedral capsid. Most capsids appear to be large particles with an icosahedral symmetry of T=4 and consist of 240 copies of capsid protein, though a fraction forms smaller T=3 particles consisting of 180 capsid proteins. Entering capsids are transported along microtubules to the nucleus. Phosphorylation of the capsid is thought to induce exposure of nuclear localization signal in the C-terminal portion of the capsid protein that allows binding to the nuclear pore complex via the importin (karyopherin-) alpha and beta. Capsids are imported in intact form through the nuclear pore into the nuclear basket, where it probably binds NUP153. Only capsids that contain the mature viral genome can release the viral DNA and capsid protein into the nucleoplasm. Immature capsids get stuck in the basket. Capsids encapsulate the pre-genomic RNA and the P protein. Pre-genomic RNA is reverse-transcribed into DNA while the capsid is still in the cytoplasm. The capsid can then either be directed to the nucleus, providing more genomes for transcription, or bud through the endoplasmic reticulum to provide new virions. This is Capsid protein from Hepatitis B virus genotype B1 (isolate Japan/Ry30/2002) (HBV-B).